Reading from the N-terminus, the 44-residue chain is SPbeta prophage-derived uncharacterized protein YosI (44 aa).

This is SPbeta prophage-derived uncharacterized protein YosI (yosI) from Bacillus subtilis (strain 168).